A 166-amino-acid chain; its full sequence is Large ribosomal subunit protein uL10 (166 aa).

Belongs to the universal ribosomal protein uL10 family. As to quaternary structure, part of the ribosomal stalk of the 50S ribosomal subunit. The N-terminus interacts with L11 and the large rRNA to form the base of the stalk. The C-terminus forms an elongated spine to which L12 dimers bind in a sequential fashion forming a multimeric L10(L12)X complex.

Its function is as follows. Forms part of the ribosomal stalk, playing a central role in the interaction of the ribosome with GTP-bound translation factors. The protein is Large ribosomal subunit protein uL10 of Streptococcus agalactiae serotype V (strain ATCC BAA-611 / 2603 V/R).